The chain runs to 632 residues: MAERELSVAILAAGKGTRMRSQLPKVLHKLGSLSLIERLLRTVLTLKPHRCLVVVGYEQEQVRQALREYPVEFVEQAQQLGTGHAVQQLLPVLGGFQGDLLVINGDVPLLRAETLQALVERHRQVNPEVTLLSAQVADPYGYGRVFCDAQQRVLELVEERDCTPAQRQNRRINSGVYCFHWPALAQVLPHLNRNNAQQEYYLTDAVKRVGKAIALDVADPQEIVGVNDRRQLAQAYQILQDRLKEAWMEAGVTFVDPDSSSLEETVELAPDVVIEPQTHLRGVCRIGPGTRLGPGSWIESSEIGSGCHILYSVVSHSRIGNHVWIGPYAHVRPHSQIGDHCRIGNFVETKNAQIGSHSNAAHLAYLGDAKLGSQVNIGAGTIIANYDGQQKHFTEIGDRSKTGANSVLVAPLQVGSDVTIAAGSTIPARYPLPDDCLVIARSRPVVKPGWRLGIRSSRPQEPQPMPPGSLKIYPLRLFPGQDLKQELERLARQQPLQAGFVLSAVGSLSQATLRLADQTGDHLLSERLEILALSGSLCPDGVHLHLTVADARGQTWGGHLRPGCLIYTTAEIVLADSPEYRFSRQPDPATGYLELHIQPVAGDPCWPSPPPQPQQNQQTKPEADNSRPKSLQ.

Residues 1–229 (MAERELSVAI…PQEIVGVNDR (229 aa)) are pyrophosphorylase. Residues 11–14 (LAAG), lysine 25, glutamine 76, and 81–82 (GT) each bind UDP-N-acetyl-alpha-D-glucosamine. Mg(2+) is bound at residue aspartate 106. UDP-N-acetyl-alpha-D-glucosamine is bound by residues glycine 143, glutamate 158, asparagine 173, and asparagine 227. Asparagine 227 is a binding site for Mg(2+). Positions 230–250 (RQLAQAYQILQDRLKEAWMEA) are linker. The tract at residues 251-632 (GVTFVDPDSS…ADNSRPKSLQ (382 aa)) is N-acetyltransferase. UDP-N-acetyl-alpha-D-glucosamine-binding residues include arginine 332 and lysine 350. The active-site Proton acceptor is histidine 362. Tyrosine 365 and asparagine 376 together coordinate UDP-N-acetyl-alpha-D-glucosamine. Residues alanine 379, 385-386 (NY), alanine 422, and arginine 441 each bind acetyl-CoA. Residues 600 to 632 (VAGDPCWPSPPPQPQQNQQTKPEADNSRPKSLQ) are disordered. Residues 621–632 (PEADNSRPKSLQ) are compositionally biased toward basic and acidic residues.

It in the N-terminal section; belongs to the N-acetylglucosamine-1-phosphate uridyltransferase family. In the C-terminal section; belongs to the transferase hexapeptide repeat family. Homotrimer. Requires Mg(2+) as cofactor.

It localises to the cytoplasm. It carries out the reaction alpha-D-glucosamine 1-phosphate + acetyl-CoA = N-acetyl-alpha-D-glucosamine 1-phosphate + CoA + H(+). It catalyses the reaction N-acetyl-alpha-D-glucosamine 1-phosphate + UTP + H(+) = UDP-N-acetyl-alpha-D-glucosamine + diphosphate. Its pathway is nucleotide-sugar biosynthesis; UDP-N-acetyl-alpha-D-glucosamine biosynthesis; N-acetyl-alpha-D-glucosamine 1-phosphate from alpha-D-glucosamine 6-phosphate (route II): step 2/2. It functions in the pathway nucleotide-sugar biosynthesis; UDP-N-acetyl-alpha-D-glucosamine biosynthesis; UDP-N-acetyl-alpha-D-glucosamine from N-acetyl-alpha-D-glucosamine 1-phosphate: step 1/1. It participates in bacterial outer membrane biogenesis; LPS lipid A biosynthesis. Its function is as follows. Catalyzes the last two sequential reactions in the de novo biosynthetic pathway for UDP-N-acetylglucosamine (UDP-GlcNAc). The C-terminal domain catalyzes the transfer of acetyl group from acetyl coenzyme A to glucosamine-1-phosphate (GlcN-1-P) to produce N-acetylglucosamine-1-phosphate (GlcNAc-1-P), which is converted into UDP-GlcNAc by the transfer of uridine 5-monophosphate (from uridine 5-triphosphate), a reaction catalyzed by the N-terminal domain. The chain is Bifunctional protein GlmU from Synechococcus sp. (strain JA-2-3B'a(2-13)) (Cyanobacteria bacterium Yellowstone B-Prime).